Here is a 208-residue protein sequence, read N- to C-terminus: Recombination protein RecR (208 aa).

Residues 60–75 form a C4-type zinc finger; the sequence is CKVCHNICDDEVCSIC. One can recognise a Toprim domain in the interval 83–178; the sequence is SLVCVVENIK…RISVIARGVS (96 aa).

It belongs to the RecR family.

May play a role in DNA repair. It seems to be involved in an RecBC-independent recombinational process of DNA repair. It may act with RecF and RecO. The protein is Recombination protein RecR of Parabacteroides distasonis (strain ATCC 8503 / DSM 20701 / CIP 104284 / JCM 5825 / NCTC 11152).